We begin with the raw amino-acid sequence, 423 residues long: Kynureninase (423 aa).

Pyridoxal 5'-phosphate contacts are provided by residues leucine 105, serine 106, 133–136, aspartate 218, histidine 221, and tyrosine 243; that span reads FPSD. Lysine 244 bears the N6-(pyridoxal phosphate)lysine mark. Residues tryptophan 273 and asparagine 301 each coordinate pyridoxal 5'-phosphate.

The protein belongs to the kynureninase family. In terms of assembly, homodimer. Pyridoxal 5'-phosphate is required as a cofactor.

It carries out the reaction L-kynurenine + H2O = anthranilate + L-alanine + H(+). It catalyses the reaction 3-hydroxy-L-kynurenine + H2O = 3-hydroxyanthranilate + L-alanine + H(+). Its pathway is amino-acid degradation; L-kynurenine degradation; L-alanine and anthranilate from L-kynurenine: step 1/1. It functions in the pathway cofactor biosynthesis; NAD(+) biosynthesis; quinolinate from L-kynurenine: step 2/3. In terms of biological role, catalyzes the cleavage of L-kynurenine (L-Kyn) and L-3-hydroxykynurenine (L-3OHKyn) into anthranilic acid (AA) and 3-hydroxyanthranilic acid (3-OHAA), respectively. This chain is Kynureninase, found in Xanthomonas oryzae pv. oryzae (strain PXO99A).